The primary structure comprises 119 residues: Ribonuclease P protein component (119 aa).

Belongs to the RnpA family. In terms of assembly, consists of a catalytic RNA component (M1 or rnpB) and a protein subunit.

It carries out the reaction Endonucleolytic cleavage of RNA, removing 5'-extranucleotides from tRNA precursor.. In terms of biological role, RNaseP catalyzes the removal of the 5'-leader sequence from pre-tRNA to produce the mature 5'-terminus. It can also cleave other RNA substrates such as 4.5S RNA. The protein component plays an auxiliary but essential role in vivo by binding to the 5'-leader sequence and broadening the substrate specificity of the ribozyme. In Escherichia fergusonii (strain ATCC 35469 / DSM 13698 / CCUG 18766 / IAM 14443 / JCM 21226 / LMG 7866 / NBRC 102419 / NCTC 12128 / CDC 0568-73), this protein is Ribonuclease P protein component.